Here is a 159-residue protein sequence, read N- to C-terminus: Small heat shock protein hspM (159 aa).

Residues 1–159 (MFVLNFELAG…LSNNIKIQIN (159 aa)) enclose the sHSP domain. The segment at 35–101 (MNNNNKNNLQ…NNNNKSSKTN (67 aa)) is disordered. 2 stretches are compositionally biased toward low complexity: residues 36–46 (NNNNKNNLQIN) and 61–95 (SSSSNNNNNNNNNNNNNNNNNNNNNNNNNSNNNNN).

The protein belongs to the small heat shock protein (HSP20) family.

This is Small heat shock protein hspM (hspM) from Dictyostelium discoideum (Social amoeba).